The following is a 352-amino-acid chain: C-X-C chemokine receptor type 4 (352 aa).

An important for chemokine binding and signaling region spans residues 1–21 (MEGISIYTSDNYTEEMGSGDY). Topologically, residues 1-38 (MEGISIYTSDNYTEEMGSGDYDSIKEPCFREENAHFNR) are extracellular. At tyrosine 7 the chain carries Sulfotyrosine. A glycan (N-linked (GlcNAc...) asparagine) is linked at asparagine 11. Tyrosine 12 carries the sulfotyrosine modification. A glycan (O-linked (Xyl...) (chondroitin sulfate) serine) is linked at serine 18. Tyrosine 21 is modified (sulfotyrosine). Disulfide bonds link cysteine 28/cysteine 274 and cysteine 109/cysteine 186. The helical transmembrane segment at 39–63 (IFLPTIYSIIFLTGIVGNGLVILVM) threads the bilayer. Residues 64–77 (GYQKKLRSMTDKYR) are Cytoplasmic-facing. The chain crosses the membrane as a helical span at residues 78 to 99 (LHLSVADLLFVITLPFWAVDAV). Positions 94-97 (WAVD) are chemokine binding. Residues 100-110 (ANWYFGNFLCK) lie on the Extracellular side of the membrane. A helical transmembrane segment spans residues 111-130 (AVHVIYTVNLYSSVLILAFI). Positions 113 to 117 (HVIYT) are chemokine binding. Over 131 to 154 (SLDRYLAIVHATNSQKPRKLLAEK) the chain is Cytoplasmic. The Important for signaling signature appears at 133–135 (DRY). Residues 135-147 (YLAIVHATNSQKP) are involved in dimerization; when bound to chemokine. The chain crosses the membrane as a helical span at residues 155–174 (VVYVGVWIPALLLTIPDFIF). At 175-195 (ASVSEADDRYICDRFYPNDLW) the chain is on the extracellular side. A chemokine binding, important for signaling region spans residues 186–190 (CDRFY). The tract at residues 191-210 (PNDLWVVVFQFQHIMVGLIL) is involved in dimerization. A helical transmembrane segment spans residues 196–216 (VVVFQFQHIMVGLILPGIVIL). Residues 217–241 (SCYCIIISKLSHSKGHQKGKALKTT) lie on the Cytoplasmic side of the membrane. A helical transmembrane segment spans residues 242-261 (VILILAFFACWLPYYIGISI). Over 262–282 (DSFILLEIIKQGCEFENTVHK) the chain is Extracellular. Residues 266–268 (LLE) form an involved in dimerization region. A helical membrane pass occupies residues 283–302 (WISITEALAFFHCCLNPILY). Topologically, residues 303–352 (AFLGAKFKTSAQHALTSVSRGSSLKILSKGKRGGHSSVSTESESSSFHSS) are cytoplasmic. 2 positions are modified to phosphoserine: serine 319 and serine 321. Phosphoserine; by PKC and GRK6 occurs at positions 324 and 325. A disordered region spans residues 329-352 (LSKGKRGGHSSVSTESESSSFHSS). Residue serine 330 is modified to Phosphoserine; by GRK6. Lysine 331 is covalently cross-linked (Glycyl lysine isopeptide (Lys-Gly) (interchain with G-Cter in ubiquitin)). Low complexity predominate over residues 337-352 (HSSVSTESESSSFHSS). Phosphoserine; by GRK6 is present on serine 339. A phosphoserine mark is found at serine 348 and serine 351.

The protein belongs to the G-protein coupled receptor 1 family. In terms of assembly, monomer. Can form homodimers. Interacts with CD164. Interacts with ARRB2; the interaction is dependent on the C-terminal phosphorylation of CXCR4 and allows activation of MAPK1 and MAPK3. Interacts with ARR3; the interaction is dependent on the C-terminal phosphorylation of CXCR4 and modulates calcium mobilization. Interacts with RNF113A; the interaction, enhanced by CXCL12, promotes CXCR4 ubiquitination and subsequent degradation. Interacts (via the cytoplasmic C-terminal) with ITCH (via the WW domains I and II); the interaction, enhanced by CXCL12, promotes CXCR4 ubiquitination and leads to its degradation. Interacts with extracellular ubiquitin. Interacts with DBN1; this interaction is enhanced by antigenic stimulation. Following LPS binding, may form a complex with GDF5, HSP90AA1 and HSPA8. In terms of processing, phosphorylated on agonist stimulation. Rapidly phosphorylated on serine and threonine residues in the C-terminal. Phosphorylation at Ser-324 and Ser-325 leads to recruitment of ITCH, ubiquitination and protein degradation. Ubiquitinated after ligand binding, leading to its degradation. Ubiquitinated by ITCH at the cell membrane on agonist stimulation. The ubiquitin-dependent mechanism, endosomal sorting complex required for transport (ESCRT), then targets CXCR4 for lysosomal degradation. This process is dependent also on prior Ser-/Thr-phosphorylation in the C-terminal of CXCR4. Also binding of ARRB1 to STAM negatively regulates CXCR4 sorting to lysosomes though modulating ubiquitination of SFR5S. Post-translationally, sulfation is required for efficient binding of CXCL12/SDF-1alpha and promotes its dimerization. In terms of processing, O- and N-glycosylated. N-glycosylation can mask coreceptor function. The O-glycosylation chondroitin sulfate attachment does not affect interaction with CXCL12/SDF-1alpha nor its coreceptor activity.

The protein resides in the cell membrane. The protein localises to the cell junction. It localises to the early endosome. Its subcellular location is the late endosome. It is found in the lysosome. Receptor for the C-X-C chemokine CXCL12/SDF-1 that transduces a signal by increasing intracellular calcium ion levels and enhancing MAPK1/MAPK3 activation. Involved in the AKT signaling cascade. Plays a role in regulation of cell migration, e.g. during wound healing. Acts as a receptor for extracellular ubiquitin; leading to enhanced intracellular calcium ions and reduced cellular cAMP levels. Binds bacterial lipopolysaccharide (LPS) et mediates LPS-induced inflammatory response, including TNF secretion by monocytes. Involved in hematopoiesis and in cardiac ventricular septum formation. Also plays an essential role in vascularization of the gastrointestinal tract, probably by regulating vascular branching and/or remodeling processes in endothelial cells. Involved in cerebellar development. In the CNS, could mediate hippocampal-neuron survival. This Chlorocebus aethiops (Green monkey) protein is C-X-C chemokine receptor type 4 (CXCR4).